The sequence spans 510 residues: Lysine--tRNA ligase (510 aa).

Residues Glu-420 and Glu-427 each contribute to the Mg(2+) site.

It belongs to the class-II aminoacyl-tRNA synthetase family. Homodimer. The cofactor is Mg(2+).

The protein resides in the cytoplasm. It catalyses the reaction tRNA(Lys) + L-lysine + ATP = L-lysyl-tRNA(Lys) + AMP + diphosphate. This chain is Lysine--tRNA ligase, found in Psychrobacter sp. (strain PRwf-1).